The primary structure comprises 201 residues: Glycerol-3-phosphate acyltransferase (201 aa).

The next 5 helical transmembrane spans lie at 4 to 24 (LVAA…LVLT), 55 to 75 (LATL…VWVL), 80 to 100 (MVPV…WLGF), 110 to 130 (IGTL…TWLV), and 152 to 174 (FALY…MGFY).

The protein belongs to the PlsY family. In terms of assembly, probably interacts with PlsX.

It localises to the cell inner membrane. It catalyses the reaction an acyl phosphate + sn-glycerol 3-phosphate = a 1-acyl-sn-glycero-3-phosphate + phosphate. It functions in the pathway lipid metabolism; phospholipid metabolism. Catalyzes the transfer of an acyl group from acyl-phosphate (acyl-PO(4)) to glycerol-3-phosphate (G3P) to form lysophosphatidic acid (LPA). This enzyme utilizes acyl-phosphate as fatty acyl donor, but not acyl-CoA or acyl-ACP. The protein is Glycerol-3-phosphate acyltransferase of Paramagnetospirillum magneticum (strain ATCC 700264 / AMB-1) (Magnetospirillum magneticum).